We begin with the raw amino-acid sequence, 317 residues long: Universal stress protein Mb2019 (317 aa).

ATP-binding positions include glycine 13, 128–134 (GYRGQGA), 142–143 (SV), glycine 175, aspartate 208, 277–283 (GSHGRGG), and 291–293 (SVS).

This sequence belongs to the universal stress protein A family.

This chain is Universal stress protein Mb2019, found in Mycobacterium bovis (strain ATCC BAA-935 / AF2122/97).